A 244-amino-acid chain; its full sequence is MASIRVADEPAFVLHSIPYKETSLILDVFTRQHGRMALIAKGAKRPHSVLRPVLQRFQPLLVSWSGKSELRTLTKSEWVGGMPSLVGDALLCGFYLNELLVKFLAREDDYERLYDRYSETINALSNLEFESKGLEEILRPFELSLLQETGYAAALDRCVETNDSPVFEALYVYQPERGVRPIQVDDPGHWPVLRGKSLLAIAAGDFSDPETLSESKQLMRFLLGLHLQDQVLTTRQILIDLKKI.

This sequence belongs to the RecO family.

Its function is as follows. Involved in DNA repair and RecF pathway recombination. The polypeptide is DNA repair protein RecO (Polynucleobacter asymbioticus (strain DSM 18221 / CIP 109841 / QLW-P1DMWA-1) (Polynucleobacter necessarius subsp. asymbioticus)).